The chain runs to 700 residues: Methionine--tRNA ligase (700 aa).

A 'HIGH' region motif is present at residues 14-24; that stretch reads PYANGPVHLGH. Cysteine 146, cysteine 149, cysteine 159, and cysteine 162 together coordinate Zn(2+). Residues 344-348 carry the 'KMSKS' region motif; that stretch reads KFSKS. Lysine 347 provides a ligand contact to ATP. The 102-residue stretch at 599–700 folds into the tRNA-binding domain; sequence DFLKVDLRVA…GEEINGRQIQ (102 aa).

This sequence belongs to the class-I aminoacyl-tRNA synthetase family. MetG type 1 subfamily. As to quaternary structure, homodimer. Requires Zn(2+) as cofactor.

The protein resides in the cytoplasm. The enzyme catalyses tRNA(Met) + L-methionine + ATP = L-methionyl-tRNA(Met) + AMP + diphosphate. Is required not only for elongation of protein synthesis but also for the initiation of all mRNA translation through initiator tRNA(fMet) aminoacylation. The sequence is that of Methionine--tRNA ligase from Pelodictyon phaeoclathratiforme (strain DSM 5477 / BU-1).